The sequence spans 264 residues: MNAIQPDDAGYWLLTQDSALYLINGELPQGKAADFQLQGYNGMIIGELNGRPLWLVEEIADDQRTYFSLRSLLALPEAHFNLLNRGVELNHFFKTHRFCGKCGHPTDLVQQEWAIQCQNPSCSHRTYPVICPCIIVAVRRGAQILLANHQRHKGGIYTTLAGFVEVGETFEQAVHREVLEETGIQIQNLRYFGSQPWAFPNSAMIGFLADYAGGEICVQEMEIHDAQWFDYNAPLPELPPKGTIALKLIEHTLQLCAEEERKAT.

Arg-70 contacts substrate. Cys-99 and Cys-102 together coordinate Zn(2+). Glu-112 contributes to the substrate binding site. Residues Cys-117 and Cys-122 each contribute to the Zn(2+) site. Position 127 (Tyr-127) interacts with substrate. Residues Pro-128–Thr-252 form the Nudix hydrolase domain. The a divalent metal cation site is built by Ala-161, Glu-177, and Glu-181. The short motif at Gly-162–Gly-183 is the Nudix box element. Gln-195–Ser-202 is a substrate binding site. Glu-222 contacts a divalent metal cation. Substrate is bound at residue Ala-245.

It belongs to the Nudix hydrolase family. NudC subfamily. In terms of assembly, homodimer. The cofactor is Mg(2+). Requires Mn(2+) as cofactor. It depends on Zn(2+) as a cofactor.

The enzyme catalyses a 5'-end NAD(+)-phospho-ribonucleoside in mRNA + H2O = a 5'-end phospho-adenosine-phospho-ribonucleoside in mRNA + beta-nicotinamide D-ribonucleotide + 2 H(+). It carries out the reaction NAD(+) + H2O = beta-nicotinamide D-ribonucleotide + AMP + 2 H(+). The catalysed reaction is NADH + H2O = reduced beta-nicotinamide D-ribonucleotide + AMP + 2 H(+). Functionally, mRNA decapping enzyme that specifically removes the nicotinamide adenine dinucleotide (NAD) cap from a subset of mRNAs by hydrolyzing the diphosphate linkage to produce nicotinamide mononucleotide (NMN) and 5' monophosphate mRNA. The NAD-cap is present at the 5'-end of some mRNAs and stabilizes RNA against 5'-processing. Has preference for mRNAs with a 5'-end purine. Catalyzes the hydrolysis of a broad range of dinucleotide pyrophosphates. The protein is NAD-capped RNA hydrolase NudC of Pasteurella multocida (strain Pm70).